Consider the following 572-residue polypeptide: Nucleolin 1 (572 aa).

Disordered regions lie at residues 1 to 312 (MGKA…ESAT) and 488 to 572 (DEAK…FGDE). Over residues 7-21 (KSVAVAVAPAAVPAK) the composition is skewed to low complexity. Residues 27–38 (KREAEDEIEKAV) show a composition bias toward basic and acidic residues. 2 stretches are compositionally biased toward low complexity: residues 45-58 (AAAA…PAPK) and 72-81 (KAASSSSGSS). Composition is skewed to acidic residues over residues 82–91 (SEEDSSESEE), 109–122 (SSDE…DDED), 144–156 (SESD…DEDE), 177–191 (DSSE…SDED), 208–222 (STDG…EDED), 235–247 (SDEE…ESSD), and 261–276 (ESSE…EEDE). Residues 300-311 (PASNQSQGTESA) are compositionally biased toward polar residues. RRM domains follow at residues 311 to 387 (ATLF…LAHE) and 411 to 492 (QSIF…EAKP). Composition is skewed to basic and acidic residues over residues 488-520 (DEAK…DRFG) and 528-545 (GGRD…DGGR). A compositionally biased stretch (polar residues) spans 553-566 (QSRQSAGTASTGKK).

It is found in the nucleus. The protein localises to the nucleolus. Functionally, involved in pre-rRNA processing and ribosome assembly. This Oryza sativa subsp. japonica (Rice) protein is Nucleolin 1.